Consider the following 61-residue polypeptide: Transmembrane protein 300R (61 aa).

The next 2 helical transmembrane spans lie at 5–25 (FLDL…FYLT) and 35–55 (SLSY…IYLQ).

The protein localises to the membrane. The chain is Transmembrane protein 300R from Invertebrate iridescent virus 6 (IIV-6).